A 257-amino-acid chain; its full sequence is Short chain dehydrogenase prhI (257 aa).

The helical transmembrane segment at 7–29 threads the bilayer; the sequence is HVVIITGSSSGIGLAASTLALAS. Ile-11 contacts NADP(+). The N-linked (GlcNAc...) asparagine glycan is linked to Asn-50. Residue Asp-57 coordinates NADP(+). Residues Asn-92 and Asn-110 are each glycosylated (N-linked (GlcNAc...) asparagine). Arg-119, Tyr-151, Lys-155, and Val-184 together coordinate NADP(+). Tyr-151 serves as the catalytic Proton acceptor. The active-site Lowers pKa of active site Tyr is the Lys-155.

It belongs to the short-chain dehydrogenases/reductases (SDR) family.

Its subcellular location is the membrane. The catalysed reaction is protoaustinoid A + A = protoaustinoid B + AH2. The protein operates within secondary metabolite biosynthesis; terpenoid biosynthesis. Functionally, short chain dehydrogenase; part of the gene cluster that mediates the biosynthesis of paraherquonin, a meroterpenoid with a unique, highly congested hexacyclic molecular architecture. The first step of the pathway is the synthesis of 3,5-dimethylorsellinic acid (DMOA) by the polyketide synthase prhL. Synthesis of DMOA is followed by farnesylation by the prenyltransferase prhE, methylesterification by the methyl-transferase prhM, epoxidation of the prenyl chain by the flavin-dependent monooxygenase prhF, and cyclization of the farnesyl moiety by the terpene cyclase prhH, to yield the tetracyclic intermediate, protoaustinoid A. The short chain dehydrogenase prhI then oxidizes the C-3 alcohol group of the terpene cyclase product to transform protoaustinoid A into protoaustinoid B. The FAD-binding monooxygenase prhJ catalyzes the oxidation of protoaustinoid B into preaustinoid A which is further oxidized into preaustinoid A1 by FAD-binding monooxygenase phrK. Finally, prhA leads to berkeleydione via the berkeleyone B intermediate. PrhA is a multifunctional dioxygenase that first desaturates at C5-C6 to form berkeleyone B, followed by rearrangement of the A/B-ring to form the cycloheptadiene moiety in berkeleydione. Berkeleydione serves as the key intermediate for the biosynthesis of paraherquonin as well as many other meroterpenoids. The cytochrome P450 monooxygenases prhB, prhD, and prhN, as well as the isomerase prhC, are probably involved in the late stage of paraherquonin biosynthesis, after the production of berkeleydione. Especially prhC might be a multifunctional enzyme that catalyzes the D-ring expansion via intramolecular methoxy rearrangement, as well as the hydrolysis of the expanded D-ring. The chain is Short chain dehydrogenase prhI from Penicillium brasilianum.